A 204-amino-acid chain; its full sequence is High frequency lysogenization protein HflD homolog (204 aa).

The protein belongs to the HflD family.

The protein resides in the cytoplasm. Its subcellular location is the cell inner membrane. This chain is High frequency lysogenization protein HflD homolog, found in Xanthomonas campestris pv. campestris (strain ATCC 33913 / DSM 3586 / NCPPB 528 / LMG 568 / P 25).